We begin with the raw amino-acid sequence, 140 residues long: L-fucose mutarotase (140 aa).

His-22 functions as the Proton donor in the catalytic mechanism. Residues Asp-30, Arg-107, and 129-131 each bind substrate; that span reads YGN.

This sequence belongs to the RbsD / FucU family. FucU mutarotase subfamily. Homodecamer.

It is found in the cytoplasm. The enzyme catalyses alpha-L-fucose = beta-L-fucose. The protein operates within carbohydrate metabolism; L-fucose metabolism. In terms of biological role, involved in the anomeric conversion of L-fucose. The chain is L-fucose mutarotase from Salmonella typhimurium (strain LT2 / SGSC1412 / ATCC 700720).